Here is a 73-residue protein sequence, read N- to C-terminus: Sodium channel neurotoxin MeuNaTxalpha-13 (73 aa).

An N-terminal signal peptide occupies residues 1–5 (TGVES). The region spanning 7-71 (RDAYIAKPHN…VPIRIPGKCH (65 aa)) is the LCN-type CS-alpha/beta domain. 4 disulfide bridges follow: cysteine 17-cysteine 70, cysteine 21-cysteine 43, cysteine 29-cysteine 53, and cysteine 33-cysteine 55. The propeptide at 72-73 (RR) is removed by a carboxypeptidase.

It belongs to the long (4 C-C) scorpion toxin superfamily. Sodium channel inhibitor family. Alpha subfamily. In terms of tissue distribution, expressed by the venom gland.

It is found in the secreted. Functionally, alpha toxins bind voltage-independently at site-3 of sodium channels (Nav) and inhibit the inactivation of the activated channels, thereby blocking neuronal transmission. The protein is Sodium channel neurotoxin MeuNaTxalpha-13 of Mesobuthus eupeus (Lesser Asian scorpion).